The primary structure comprises 211 residues: Thymidylate kinase (211 aa).

Residue 10 to 17 coordinates ATP; the sequence is GGDGVGKS.

This sequence belongs to the thymidylate kinase family.

It catalyses the reaction dTMP + ATP = dTDP + ADP. Phosphorylation of dTMP to form dTDP in both de novo and salvage pathways of dTTP synthesis. The polypeptide is Thymidylate kinase (Clavibacter michiganensis subsp. michiganensis (strain NCPPB 382)).